A 502-amino-acid chain; its full sequence is UPF0371 protein CLJ_B0384 (502 aa).

The protein belongs to the UPF0371 family.

This Clostridium botulinum (strain 657 / Type Ba4) protein is UPF0371 protein CLJ_B0384.